Reading from the N-terminus, the 123-residue chain is Large ribosomal subunit protein bL12 (123 aa).

It belongs to the bacterial ribosomal protein bL12 family. In terms of assembly, homodimer. Part of the ribosomal stalk of the 50S ribosomal subunit. Forms a multimeric L10(L12)X complex, where L10 forms an elongated spine to which 2 to 4 L12 dimers bind in a sequential fashion. Binds GTP-bound translation factors.

Forms part of the ribosomal stalk which helps the ribosome interact with GTP-bound translation factors. Is thus essential for accurate translation. This Psychrobacter arcticus (strain DSM 17307 / VKM B-2377 / 273-4) protein is Large ribosomal subunit protein bL12.